Consider the following 221-residue polypeptide: Glutathione peroxidase 6 (221 aa).

A signal peptide spans 1–19 (MTQQFWGPCLFSLFMAVLA). Cys-73 is a catalytic residue.

It belongs to the glutathione peroxidase family. In terms of tissue distribution, expressed in the Bowman glands.

The protein resides in the secreted. It catalyses the reaction 2 glutathione + H2O2 = glutathione disulfide + 2 H2O. The sequence is that of Glutathione peroxidase 6 (Gpx6) from Rattus norvegicus (Rat).